The chain runs to 191 residues: MSIKSDRWIRHMAQQHGMIAPFEPGQIKQNATGQRIVSYGTSSYGYDVRCSREFKIFTNINSTIVDPKQFDNGSFIDVESDVCIIPPNSFALARTIEYFRIPRNVLVICLGKSTYARCGIIVNVTPLEPEWEGHVTLEFSNTTPLPARIYANEGVAQMLFLQADPDDVCQTSYRDRNGKYQGQTGVTLPRT.

DCTP-binding positions include lysine 112–arginine 117, threonine 136–glutamate 138, glutamine 157, tyrosine 173, and glutamine 183. Glutamate 138 serves as the catalytic Proton donor/acceptor.

The protein belongs to the dCTP deaminase family. Homotrimer.

It carries out the reaction dCTP + H2O + H(+) = dUTP + NH4(+). Its pathway is pyrimidine metabolism; dUMP biosynthesis; dUMP from dCTP (dUTP route): step 1/2. Its function is as follows. Catalyzes the deamination of dCTP to dUTP. The sequence is that of dCTP deaminase from Xylella fastidiosa (strain 9a5c).